The primary structure comprises 319 residues: 1-aminocyclopropane-1-carboxylate oxidase (319 aa).

In terms of domain architecture, Fe2OG dioxygenase spans 152-253; the sequence is GPNFGSKVSN…RMSLASFYNP (102 aa). Residues His-177, Asp-179, and His-234 each coordinate Fe cation.

This sequence belongs to the iron/ascorbate-dependent oxidoreductase family. The cofactor is Fe cation.

It catalyses the reaction 1-aminocyclopropane-1-carboxylate + L-ascorbate + O2 = ethene + L-dehydroascorbate + hydrogen cyanide + CO2 + 2 H2O. The protein operates within alkene biosynthesis; ethylene biosynthesis via S-adenosyl-L-methionine; ethylene from S-adenosyl-L-methionine: step 2/2. This Nicotiana tabacum (Common tobacco) protein is 1-aminocyclopropane-1-carboxylate oxidase (ACO).